A 163-amino-acid polypeptide reads, in one-letter code: Large ribosomal subunit protein uL15 (163 aa).

The span at 1-29 shows a compositional bias: basic residues; it reads MSKKRRQRGSRTHGGGSHKNRRGAGHRGG. Disordered regions lie at residues 1–59 and 135–163; these read MSKK…KTRR and VADG…DEES. Composition is skewed to basic and acidic residues over residues 33–46 and 142–154; these read AGRD…HEPL and LSER…AEKD.

This sequence belongs to the universal ribosomal protein uL15 family. As to quaternary structure, part of the 50S ribosomal subunit.

Its function is as follows. Binds to the 23S rRNA. This chain is Large ribosomal subunit protein uL15, found in Natronomonas pharaonis (strain ATCC 35678 / DSM 2160 / CIP 103997 / JCM 8858 / NBRC 14720 / NCIMB 2260 / Gabara) (Halobacterium pharaonis).